The following is a 164-amino-acid chain: uncharacterized protein (164 aa).

The next 4 helical transmembrane spans lie at 25-45 (QFGF…PLLG), 63-83 (GMAV…VYIV), 120-140 (FWTA…ADFF), and 141-161 (TVQM…LMMM).

The protein belongs to the major facilitator superfamily.

Its subcellular location is the cell membrane. This is an uncharacterized protein from Bacillus subtilis (strain 168).